The following is a 90-amino-acid chain: MSITSQKKKSLISTYAIKEDDTGSSFVQCAILTERISNLTEHFKAHKHDHNSKRGLLILIGRRRKHLNYIKRKFGNEAYQELIEKLGIRK.

This sequence belongs to the universal ribosomal protein uS15 family. Part of the 30S ribosomal subunit. Forms a bridge to the 50S subunit in the 70S ribosome, contacting the 23S rRNA.

In terms of biological role, one of the primary rRNA binding proteins, it binds directly to 16S rRNA where it helps nucleate assembly of the platform of the 30S subunit by binding and bridging several RNA helices of the 16S rRNA. Functionally, forms an intersubunit bridge (bridge B4) with the 23S rRNA of the 50S subunit in the ribosome. This Wolbachia pipientis subsp. Culex pipiens (strain wPip) protein is Small ribosomal subunit protein uS15.